The sequence spans 96 residues: MPAIEIGRICVKTRGREAGKKCVIVDIIDSNFVLVTGPKEINGVKRRRVNILHIEPTDKKVEINKGATDQEVKQAIEQSGLTDFIKEAVKPKIPVI.

It belongs to the eukaryotic ribosomal protein eL14 family.

The protein is Large ribosomal subunit protein eL14 of Sulfolobus acidocaldarius (strain ATCC 33909 / DSM 639 / JCM 8929 / NBRC 15157 / NCIMB 11770).